Here is a 21-residue protein sequence, read N- to C-terminus: Hemocyanin subunit 4 (21 aa).

The protein belongs to the tyrosinase family. Hemocyanin subfamily. Hemolymph.

It is found in the secreted. Its subcellular location is the extracellular space. Its function is as follows. Hemocyanins are copper-containing oxygen carriers occurring freely dissolved in the hemolymph of many mollusks and arthropods. This Maja squinado (Mediterranean spider crab) protein is Hemocyanin subunit 4.